The chain runs to 912 residues: Tiger protein E1 (912 aa).

Positions 1-22 (MKLKHLTIFLFIFIYRFLFVKS) are cleaved as a signal peptide. Residues 23-815 (DCYLINNERP…YSENKSSGFP (793 aa)) lie on the Extracellular side of the membrane. Asn-54, Asn-108, Asn-164, Asn-183, Asn-232, Asn-268, Asn-323, Asn-356, Asn-398, Asn-407, Asn-568, Asn-637, Asn-653, Asn-658, Asn-706, Asn-716, Asn-763, Asn-774, Asn-781, and Asn-809 each carry an N-linked (GlcNAc...) asparagine glycan. 2 IPT/TIG domains span residues 532–609 (SSDQ…GPFT) and 612–686 (PVIE…PLII). One can recognise an IPT/TIG 3 domain in the interval 715–796 (TNTSDIDQTA…DGQYFIAQIF (82 aa)). The helical transmembrane segment at 816–836 (NEMYIGIVAIIIFLALIFFAI) threads the bilayer. Residues 837–912 (KTQVEKYIEE…IRCCFKEHTD (76 aa)) are Cytoplasmic-facing.

It is found in the cell membrane. The sequence is that of Tiger protein E1 (tgrE1) from Dictyostelium discoideum (Social amoeba).